The chain runs to 75 residues: Anionic peptide (75 aa).

The first 24 residues, 1 to 24 (MVSKSLIVLLLVSVLVSTFYTSEA), serve as a signal peptide directing secretion.

It belongs to the non-disulfide-bridged peptide (NDBP) superfamily. Expressed by the venom gland.

It is found in the secreted. The sequence is that of Anionic peptide from Tityus discrepans (Venezuelan scorpion).